Consider the following 644-residue polypeptide: uncharacterized protein (644 aa).

Positions 65–117 are disordered; that stretch reads DSDVETTGGGGRGSTTSTEDRIDEHDDAIEDDGVSNEEDENQDAEQEQEVDLN. A compositionally biased stretch (acidic residues) spans 89–114; sequence HDDAIEDDGVSNEEDENQDAEQEQEV.

This is an uncharacterized protein from Arabidopsis thaliana (Mouse-ear cress).